Reading from the N-terminus, the 25-residue chain is Hypotensin-2 (25 aa).

The segment at 1 to 25 (AEIDFSGIPEDIIKEIKETNAKPPA) is disordered. Residue S6 is modified to Phosphoserine. Positions 11-25 (DIIKEIKETNAKPPA) are enriched in basic and acidic residues.

Belongs to the non-disulfide-bridged peptide (NDBP) superfamily. As to expression, expressed by the venom gland.

Its subcellular location is the secreted. Functionally, agonist of the B2 bradykinin receptor (BDKRB2). Potentiates the hypotensive effect of bradykinin (BK) and induces a direct vasorelaxing effect, independently of BK, by endothelium- and nitric oxide (NO)-dependent mechanisms in rat aortic ring preparations. Does not inhibit the angiotensin-converting enzyme (ACE). Also exerts proangiogenic, antiinflammatory, and antifibrogenic activities. Does not inhibit the angiotensin-converting enzyme (ACE) but weakly increases its activity, and weakly inhibits neprilysin (NEP) in a non-competitive manner. Exerts intermediate cytotoxicity and pro-inflammatory effects on mouse macrophages, and increases the phagocytic activity of these murine cells. Presents weak hemolytic activity at physiological concentrations (micromolar range), and weak lactate dehydrogenase (LDH) release from mast cells. Does not induce mast cell degranulation, and antimicrobial effects. In vivo, causes intense pain (but no edema formation), when injected in mice hind paws. Also induces discomfort and anxiety in mice, as it moderately diminishes locomotion and moderately increases rearing behavior. The polypeptide is Hypotensin-2 (Tityus serrulatus (Brazilian scorpion)).